A 318-amino-acid polypeptide reads, in one-letter code: Ribonuclease Z (318 aa).

Zn(2+) contacts are provided by H62, H64, D66, H67, H139, D210, and H268. Residue D66 is the Proton acceptor of the active site.

This sequence belongs to the RNase Z family. Homodimer. Zn(2+) serves as cofactor.

The catalysed reaction is Endonucleolytic cleavage of RNA, removing extra 3' nucleotides from tRNA precursor, generating 3' termini of tRNAs. A 3'-hydroxy group is left at the tRNA terminus and a 5'-phosphoryl group is left at the trailer molecule.. In terms of biological role, zinc phosphodiesterase, which displays some tRNA 3'-processing endonuclease activity. Probably involved in tRNA maturation, by removing a 3'-trailer from precursor tRNA. This is Ribonuclease Z from Gloeothece citriformis (strain PCC 7424) (Cyanothece sp. (strain PCC 7424)).